A 263-amino-acid chain; its full sequence is 4-hydroxy-tetrahydrodipicolinate reductase (263 aa).

NAD(+) contacts are provided by residues 7–12 (GFKGRM), 96–98 (GTT), and 122–125 (APNF). Catalysis depends on H152, which acts as the Proton donor/acceptor. (S)-2,3,4,5-tetrahydrodipicolinate is bound at residue H153. The active-site Proton donor is the K156. 162-163 (GT) contributes to the (S)-2,3,4,5-tetrahydrodipicolinate binding site.

This sequence belongs to the DapB family.

The protein localises to the cytoplasm. It carries out the reaction (S)-2,3,4,5-tetrahydrodipicolinate + NAD(+) + H2O = (2S,4S)-4-hydroxy-2,3,4,5-tetrahydrodipicolinate + NADH + H(+). The enzyme catalyses (S)-2,3,4,5-tetrahydrodipicolinate + NADP(+) + H2O = (2S,4S)-4-hydroxy-2,3,4,5-tetrahydrodipicolinate + NADPH + H(+). Its pathway is amino-acid biosynthesis; L-lysine biosynthesis via DAP pathway; (S)-tetrahydrodipicolinate from L-aspartate: step 4/4. Catalyzes the conversion of 4-hydroxy-tetrahydrodipicolinate (HTPA) to tetrahydrodipicolinate. In Listeria monocytogenes serotype 4b (strain F2365), this protein is 4-hydroxy-tetrahydrodipicolinate reductase.